The chain runs to 188 residues: Transcription factor E (188 aa).

An HTH TFE/IIEalpha-type domain is found at 9 to 98 (DLEVLRDVTL…SWRLNLREVL (90 aa)).

It belongs to the TFE family. In terms of assembly, monomer. Interaction with RNA polymerase subunits RpoF and RpoE is necessary for Tfe stimulatory transcription activity. Able to interact with Tbp and RNA polymerase in the absence of DNA promoter. Interacts both with the preinitiation and elongation complexes.

In terms of biological role, transcription factor that plays a role in the activation of archaeal genes transcribed by RNA polymerase. Facilitates transcription initiation by enhancing TATA-box recognition by TATA-box-binding protein (Tbp), and transcription factor B (Tfb) and RNA polymerase recruitment. Not absolutely required for transcription in vitro, but particularly important in cases where Tbp or Tfb function is not optimal. It dynamically alters the nucleic acid-binding properties of RNA polymerases by stabilizing the initiation complex and destabilizing elongation complexes. Seems to translocate with the RNA polymerase following initiation and acts by binding to the non template strand of the transcription bubble in elongation complexes. The polypeptide is Transcription factor E (Methanopyrus kandleri (strain AV19 / DSM 6324 / JCM 9639 / NBRC 100938)).